The chain runs to 173 residues: RNA pyrophosphohydrolase (173 aa).

In terms of domain architecture, Nudix hydrolase spans 11–164; that stretch reads PYRKCVGIVV…KKHVYMKVVS (154 aa). A Nudix box motif is present at residues 52–73; that stretch reads GGIDEDEKPLDAAYRELYEETG.

This sequence belongs to the Nudix hydrolase family. RppH subfamily. The cofactor is a divalent metal cation.

Its function is as follows. Accelerates the degradation of transcripts by removing pyrophosphate from the 5'-end of triphosphorylated RNA, leading to a more labile monophosphorylated state that can stimulate subsequent ribonuclease cleavage. In Bartonella tribocorum (strain CIP 105476 / IBS 506), this protein is RNA pyrophosphohydrolase.